A 188-amino-acid chain; its full sequence is GTPase KRas (188 aa).

M1 is modified (N-acetylmethionine). T2 carries the post-translational modification N-acetylthreonine; in GTPase KRas, N-terminally processed. Residues G10 to A18, V29 to T35, and A59 to G60 each bind GTP. Positions Y32–Y40 match the Effector region motif. Residue K104 is modified to N6-acetyllysine. N116 to D119 serves as a coordination point for GTP. Residues H166–C185 are hypervariable region. The tract at residues K167–M188 is disordered. C185 bears the Cysteine methyl ester mark. A lipid anchor (S-farnesyl cysteine) is attached at C185. Positions I186–M188 are cleaved as a propeptide — removed in mature form.

The protein belongs to the small GTPase superfamily. Ras family. As to quaternary structure, interacts with PHLPP. Interacts (active GTP-bound form preferentially) with RGS14. Interacts (when farnesylated) with PDE6D; this promotes dissociation from the cell membrane. Interacts with SOS1. Interacts (when farnesylated) with GPR31. Interacts with RAP1GDS1. Interacts (active GTP-bound form) with both SHOC2 and PP1c (all isoforms) to form a tertiary complex; SHOC2 and PP1c preferably bind M-Ras/MRAS, but they also bind K-Ras/KRAS, N-Ras/NRAS and H-Ras/HRAS. Interacts (GTP-bound form) with MAPKAP1/SIN1; inhibiting K-Ras/KRAS activity. In terms of processing, acetylation at Lys-104 prevents interaction with guanine nucleotide exchange factors (GEFs).

Its subcellular location is the cell membrane. The protein localises to the cytoplasm. It is found in the cytosol. It carries out the reaction GTP + H2O = GDP + phosphate + H(+). With respect to regulation, alternates between an inactive form bound to GDP and an active form bound to GTP. Activated by a guanine nucleotide-exchange factor (GEF) and inactivated by a GTPase-activating protein (GAP). Interaction with SOS1 promotes exchange of bound GDP to GTP. Ras proteins bind GDP/GTP and possess intrinsic GTPase activity. Plays an important role in the regulation of cell proliferation. Plays a role in promoting oncogenic events by inducing transcriptional silencing of tumor suppressor genes (TSGs) in colorectal cancer (CRC) cells in a ZNF304-dependent manner. The sequence is that of GTPase KRas (KRAS) from Monodelphis domestica (Gray short-tailed opossum).